The sequence spans 427 residues: 3-phosphoshikimate 1-carboxyvinyltransferase (427 aa).

The 3-phosphoshikimate site is built by K20, S21, and R25. Phosphoenolpyruvate is bound at residue K20. Phosphoenolpyruvate contacts are provided by G92 and R120. 3-phosphoshikimate-binding residues include S166, Q168, D312, and K339. Q168 is a binding site for phosphoenolpyruvate. Catalysis depends on D312, which acts as the Proton acceptor. R343 and R385 together coordinate phosphoenolpyruvate.

It belongs to the EPSP synthase family. In terms of assembly, monomer.

It is found in the cytoplasm. The catalysed reaction is 3-phosphoshikimate + phosphoenolpyruvate = 5-O-(1-carboxyvinyl)-3-phosphoshikimate + phosphate. It functions in the pathway metabolic intermediate biosynthesis; chorismate biosynthesis; chorismate from D-erythrose 4-phosphate and phosphoenolpyruvate: step 6/7. In terms of biological role, catalyzes the transfer of the enolpyruvyl moiety of phosphoenolpyruvate (PEP) to the 5-hydroxyl of shikimate-3-phosphate (S3P) to produce enolpyruvyl shikimate-3-phosphate and inorganic phosphate. This is 3-phosphoshikimate 1-carboxyvinyltransferase from Streptococcus thermophilus (strain ATCC BAA-491 / LMD-9).